The primary structure comprises 681 residues: Rabphilin-3A (681 aa).

Residues 1–21 (MTDTVVNRWMYPGDGPLQSND) are disordered. One can recognise a RabBD domain in the interval 40 to 157 (QRKQEELTDE…KRSGAWFFKG (118 aa)). The segment at 88–145 (GDGVNRCILCGEQLGMLGSACVVCEDCKKNVCTKCGVETSNNRPHPVWLCKICLEQRE) adopts an FYVE-type zinc-finger fold. Positions 94, 97, 111, 114, 119, 122, 137, and 140 each coordinate Zn(2+). A disordered region spans residues 162–375 (VLPQPMPIKK…EEEANSYDSD (214 aa)). Basic and acidic residues predominate over residues 199-208 (ARGDMEDRRP). At arginine 223 the chain carries Omega-N-methylarginine. Basic and acidic residues predominate over residues 243–252 (RDSEGWDHAH). The residue at position 271 (serine 271) is a Phosphoserine. Pro residues predominate over residues 278 to 296 (APAPVPSPAPPQPVQPGPP). Positions 347-356 (AAPYSQAAPA) are enriched in low complexity. Residues 362-375 (AEEEEEEANSYDSD) are compositionally biased toward acidic residues. The C2 1 domain maps to 379–501 (TLGALEFSLL…KANQRKNFNI (123 aa)). Ca(2+) is bound by residues methionine 409, aspartate 410, aspartate 416, aspartate 471, glutamate 472, aspartate 473, glutamate 479, glutamate 526, aspartate 568, aspartate 574, aspartate 628, tyrosine 629, aspartate 630, and aspartate 636. Residues 537–670 (ERGKILVSLM…NKDKKIERWH (134 aa)) form the C2 2 domain. Phosphoserine occurs at positions 679 and 680.

As to quaternary structure, interacts with RAB3B, RAB3C, RAB3D, RAB8A, RAB27A and RAB27B. Interacts with RAB3A; this interaction recruits RPH3A to synaptic vesicules. Interacts (via C2B domain) with SNAP25. Interacts with deubiquitinating enzyme CAND1; this interaction results in the deubiquitination of RPH3A. Interacts with GRIN2A and DLG4; this ternary complex regulates NMDA receptor composition at postsynaptic membranes. Interacts with SNCA. Ca(2+) is required as a cofactor. Ubiquitinated. Deubiquitinated by CAND1 to prevent its degradation. Specifically expressed in brain.

The protein localises to the cytoplasmic vesicle. Its subcellular location is the secretory vesicle. It is found in the synaptic vesicle membrane. It localises to the cell projection. The protein resides in the dendritic spine. The protein localises to the postsynaptic cell membrane. Its subcellular location is the membrane. Plays an essential role in docking and fusion steps of regulated exocytosis. At the presynaptic level, RPH3A is recruited by RAB3A to the synaptic vesicle membrane in a GTP-dependent manner where it modulates synaptic vesicle trafficking and calcium-triggered neurotransmitter release. In the post-synaptic compartment, forms a ternary complex with GRIN2A and DLG4 and regulates NMDA receptor stability. Also plays a role in the exocytosis of arginine vasopressin hormone. The polypeptide is Rabphilin-3A (Rph3a) (Mus musculus (Mouse)).